A 257-amino-acid polypeptide reads, in one-letter code: 4-hydroxy-tetrahydrodipicolinate reductase (257 aa).

NAD(+) contacts are provided by residues 7–12 (GAAGRM), Asp-32, 91–93 (GTT), and 115–118 (SPNF). The active-site Proton donor/acceptor is His-147. Residue His-148 participates in (S)-2,3,4,5-tetrahydrodipicolinate binding. Catalysis depends on Lys-151, which acts as the Proton donor. Residue 157–158 (GT) coordinates (S)-2,3,4,5-tetrahydrodipicolinate.

It belongs to the DapB family.

The protein localises to the cytoplasm. It carries out the reaction (S)-2,3,4,5-tetrahydrodipicolinate + NAD(+) + H2O = (2S,4S)-4-hydroxy-2,3,4,5-tetrahydrodipicolinate + NADH + H(+). It catalyses the reaction (S)-2,3,4,5-tetrahydrodipicolinate + NADP(+) + H2O = (2S,4S)-4-hydroxy-2,3,4,5-tetrahydrodipicolinate + NADPH + H(+). It functions in the pathway amino-acid biosynthesis; L-lysine biosynthesis via DAP pathway; (S)-tetrahydrodipicolinate from L-aspartate: step 4/4. Functionally, catalyzes the conversion of 4-hydroxy-tetrahydrodipicolinate (HTPA) to tetrahydrodipicolinate. This chain is 4-hydroxy-tetrahydrodipicolinate reductase, found in Archaeoglobus fulgidus (strain ATCC 49558 / DSM 4304 / JCM 9628 / NBRC 100126 / VC-16).